The primary structure comprises 2417 residues: MASASGGDVPAGREKDSKYRAYAKAIDQALKTFETPNEWADLISALGKLAKVFQSNAKFCAIPNRVTVAKRLSQCLHPALPMGVHLKALETYRQIFEILGPNKLPECLYLFAVGLFPLMDHCGIKVKSELFTIFENYLVPLGANLRPALPGFLGGVLLALEEGTEFYERSFILLDRVCEKVGPRAFYACLWQAILGSPPVRLPAMIYVNAKFDKLKSLDDQIHLVGDHVNHMVAALCAVADDTGSPLVQRYLLDFLVAAFPLDSTNLTNEDFVQLLRRCLFVVLRRDMSLNRRLYTWLINRSGETKGVSGLSLGGPDDGIELTFFKERVLGLVHGALGEYLALDTIETPFANHQNSMWGDRKEAEQVQFAEVRVCRLLLYLQDRADIGRTILETVFADFLKKSAEFHSSSNSSSLKKSPRKIQQSLKNPRKPGDREGLYLDLNSVCSTSNKDDDVTSVTSSAAANASSAPPPDEEDLVQARRIDELSKTFNMLLNSLEPGFLWTFLGDWYRRIVENNEFERQIHDFSQVVSVCLEMCNVESDPTIRTQHLPRLLETVLEGVSNKNLLSSCDQSDLLQLYTVCQKLLEISTAHPPSPIEVDEIAEDSLSMSQEVTAIEHERSQTDACLSQCLSALSAIFEIYTTRREASLIPLIDASTTLLNAFLEVPIYYLGFGIVDNPGDYCRESSEEVQPWLKNMLKVIDGPGWLREMRAGLCADVSARASLLELLCKIYVKSVQVLEQHEEAAHRPHDDFYDEMTHVLLKPLLAKRDCQFIEQGKVFGTCGEAVWLGIGSRKFCTEQQRLARLLVELHSRRPLEASSDVESIVVQSLTSTDDLVCSEAARTFHRIWVLARNLEDREQQGIPYQKPFNRAVMILLGVLADESVAKTRTELKAAAAEWFHDCSKHQDLPRIVQMLSTMLMNPVTARISIQYIRQETKMTTDTCPVIPADISAVTLVTIDGKQRLYHVTGQPAIDSSSTESTWITEVRNRLLRTSTGEDSGDPSAAGAAGILRSSSPDPDVVPAFDDDTDSLDTLSMSDSIDETVIHVLREIVDQVCEEFNEEDLERERIMTMFAMDNVEPTGASFNLPHDSEADDEVAERPAPICPDSLVQRVKKGHRRQDSLQESIFNMTDKDLSAFDTSEIFRPSTESVSRGTGAGAAAAAAAAGASSKDTILPGTVSSASSTSSAAGGTSSLFEEMHTHMLLYGESGKVVDLARAETAFRILTALLAPRGATGNRMLLNCLVSSGTTTTSDSSAEHSLVELMNRHVRAILGQHFWSAPASDEEKHKHITLLELLITISLHFLRSYFLNSPISPVTEADLTSLWKCKISALEFLCELFRELSAMLNEHESKQFVQFVQTILNRSKLQKCILHLLLTAVDHNPMESSSSKKTGGGGGPLSVSISKFNEGLLGESRRLSPLLAAYHRSLLTFTSHAIRLECDIKRGFATFSDANSSHRFSIIQSVMNQSFNNRTSRVDNHASTVELRAFLLILLNALKKQPHRHEMWLQFVVQILPWVERSLATIVCRVVEQLCKNMENAMSVAYENPPTSDVVVDSPGDVRDEPDCYPANYLAMTMELLTTLVHFCVIDSVPTSAVAGGAPGVGGAGGVTSSSGGVQQVIHENATPTPSSTSMVGHAMSVIPGSKVATELFSQLGKVFSMSGDSGGVISKLDSSRQHGNGWRQAQSDMLSSLPHSLATICNVWTVVRRAQPPIVPIGTNSQLRRLVLHLLSPIAQYHKHAFLTSLALVWLTRSTAKPTVTLRKQDPDRATFEYSSAQLDITNLLLSLQVIPFEDLISSVNSTLREASFKANKVGITTIDKANFPTEEPLLELVHSCVSAVLQTQLRLCWSSLLSLFSEAPLSALSARAVFLLFVILSDFVKCVGGAYIVEDKAMYRNVQEVCSRLAEAVNAIVGWQLETTTWLKRTLVVKQDHGSSISSSIRSVDQSPIIEIQSSMSNVSGGGGSLDNPSGSTRNSTLSLINKPGGSIGTGSSVTSTLVDSKSENMKIEKKSSSNLRASIKDTNNNRRDPAHSTQALFLLAERLTDLLDSVSKSDEKDKVLPTLQAVWANVVPYLKAKNARNARFFLASSQLLASMSSYSYMRPVWKKTTLDLLLDSGFFKMDHSALKQWLVVTDHLMTHDRTSFKDLLKSISYSPNTSFSIMTSKEQEYEARAQALKRLTFVVFGSQLDQYHGQMNDIQERLSDNLRVSQSPVIRSAVFLCIRVLLLRLRPHSLIGVWPIMVTELVHALSQLEQQLQSGEQDSGATAASSDQWMQLYVAACKLLETLCTLPAGYLSHFQMFHWAFVSSVSADKTEIFKPFAERINDLLAKKYGELLTPETMSNHTASLGAVKILTSFEELRPFFYTLANLNKSVPESNNTLRDAHALSGSLTYKNAVARLESALYVDFSEHLQF.

Disordered stretches follow at residues 409–437 (SSNS…DREG), 449–475 (SNKD…PDEE), 994–1029 (TSTG…DDDT), and 1957–2032 (SMSN…RRDP). Composition is skewed to low complexity over residues 456-468 (TSVT…NASS) and 1002-1024 (DPSA…VVPA). Positions 1969 to 1982 (DNPSGSTRNSTLSL) are enriched in polar residues. Positions 2003 to 2014 (SKSENMKIEKKS) are enriched in basic and acidic residues. Residues 2015–2025 (SSNLRASIKDT) show a composition bias toward polar residues.

Belongs to the DOP1 family.

Its function is as follows. May be involved in protein traffic between late Golgi and early endosomes. Essential for cell patterning during gastrulation. The sequence is that of Protein pad-1 (pad-1) from Caenorhabditis elegans.